A 542-amino-acid polypeptide reads, in one-letter code: Prolyl 4-hydroxylase subunit alpha-3 (542 aa).

The N-terminal stretch at 1 to 24 (MGPGARLALLALLALGGDPAAATG) is a signal peptide. Residues 105 to 129 (LEATENIRALKDGYEKVEQDLPAFE) adopt a coiled-coil conformation. One copy of the TPR repeat lies at 225 to 258 (EDALDYLAFACFQVGNVSCALSLSREFLVYSPDN). The N-linked (GlcNAc...) asparagine glycan is linked to asparagine 240. The 108-residue stretch at 420–527 (YAEYLQVVNY…KWVANKWIHE (108 aa)) folds into the Fe2OG dioxygenase domain. Residues histidine 438 and aspartate 440 each contribute to the Fe cation site. N-linked (GlcNAc...) asparagine glycosylation is present at asparagine 480. Histidine 508 contributes to the Fe cation binding site. 2-oxoglutarate is bound at residue lysine 518.

Belongs to the P4HA family. As to quaternary structure, heterotetramer of two alpha-3 chains and two beta chains (the beta chain is the multi-functional PDI). The cofactor is Fe(2+). Requires L-ascorbate as cofactor. N-glycosylation plays no role in the catalytic activity.

It is found in the endoplasmic reticulum lumen. The catalysed reaction is L-prolyl-[collagen] + 2-oxoglutarate + O2 = trans-4-hydroxy-L-prolyl-[collagen] + succinate + CO2. Catalyzes the post-translational formation of 4-hydroxyproline in -Xaa-Pro-Gly- sequences in collagens and other proteins. The polypeptide is Prolyl 4-hydroxylase subunit alpha-3 (P4ha3) (Mus musculus (Mouse)).